We begin with the raw amino-acid sequence, 119 residues long: Beta-2-microglobulin (119 aa).

Residues 1–20 (MARFVVVALLVLLSLSGLEA) form the signal peptide. The Ig-like C1-type domain maps to 25–114 (PKIQVYSRHP…VTLSTPKTVK (90 aa)). Cysteine 45 and cysteine 100 are disulfide-bonded.

The protein belongs to the beta-2-microglobulin family. As to quaternary structure, heterodimer of an alpha chain and a beta chain. Beta-2-microglobulin is the beta-chain of major histocompatibility complex class I molecules.

It is found in the secreted. Functionally, component of the class I major histocompatibility complex (MHC). Involved in the presentation of peptide antigens to the immune system. The polypeptide is Beta-2-microglobulin (B2M) (Aotus lemurinus (Gray-bellied night monkey)).